The following is a 619-amino-acid chain: Putative zinc transporter At3g08650 (619 aa).

Transmembrane regions (helical) follow at residues 25–45 (MMHSSCKGLVLLLFLFVVVFI), 102–122 (VALFTLAMAAATGLGAVPFFF), 129–149 (WAGICNGMAAGVMLAASFDLV), 155–175 (HGSGNWVVTGILAGALFIWLC), 198–218 (VVLVIGIMTLHSFGEGSGVGV), 230–250 (LLVTLAIAVHNIPEGLAVSMV), 261–281 (AMLWSIITSLPQPLVAVPAFL), 289–309 (FLPFCTGFAAGCMIWMVIAEV), 354–374 (GFFVSLLFGLGPLLGGVFLVA), 383–403 (HALLMGVASGIAFVLGLWRPL), 405–425 (LLLSAKMGLIPLVSLLAIGAG), 465–485 (LLACGAVGFHALAEGLALGVA), 528–548 (AAALIGFVGPISAIGSILAGI), 552–572 (GLDHVMVVACGGLLPSFWQVI), and 585–605 (VGMVLGLACAVVCLTFTRLVC).

This sequence belongs to the ZIP transporter (TC 2.A.5) family. ZupT subfamily.

The protein localises to the membrane. Its function is as follows. May transport zinc. The protein is Putative zinc transporter At3g08650 of Arabidopsis thaliana (Mouse-ear cress).